The following is an 80-amino-acid chain: Translation initiation factor IF-1 (80 aa).

Positions Glu-6 to Lys-80 constitute an S1-like domain.

It belongs to the IF-1 family. In terms of assembly, component of the 30S ribosomal translation pre-initiation complex which assembles on the 30S ribosome in the order IF-2 and IF-3, IF-1 and N-formylmethionyl-tRNA(fMet); mRNA recruitment can occur at any time during PIC assembly.

The protein resides in the cytoplasm. Functionally, one of the essential components for the initiation of protein synthesis. Stabilizes the binding of IF-2 and IF-3 on the 30S subunit to which N-formylmethionyl-tRNA(fMet) subsequently binds. Helps modulate mRNA selection, yielding the 30S pre-initiation complex (PIC). Upon addition of the 50S ribosomal subunit IF-1, IF-2 and IF-3 are released leaving the mature 70S translation initiation complex. The polypeptide is Translation initiation factor IF-1 (Deinococcus geothermalis (strain DSM 11300 / CIP 105573 / AG-3a)).